A 383-amino-acid polypeptide reads, in one-letter code: Vesicle-associated membrane protein-associated protein scs2 (383 aa).

The region spanning 1–123 (MSVECSGELF…SIFDRKIRCV (123 aa)) is the MSP domain. Residues 1–362 (MSVECSGELF…TGASLTESPG (362 aa)) are Cytoplasmic-facing. Positions 127–146 (KQPPQSADKQVENTSTSNPP) are enriched in polar residues. 2 disordered regions span residues 127 to 160 (KQPPQSADKQVENTSTSNPPVSVEGSENLASSVG) and 233 to 359 (ESAS…SLTE). S236, S237, S259, S261, and S268 each carry phosphoserine. The span at 241–263 (DVARSKVQDIIDNEIPKPSESPR) shows a compositional bias: basic and acidic residues. A compositionally biased stretch (basic and acidic residues) spans 289–300 (FDTKKNDFDSKL). The span at 347-359 (ADPSSSTGASLTE) shows a compositional bias: polar residues. A helical; Anchor for type IV membrane protein membrane pass occupies residues 363-383 (IPPNIVIILCLIFFLIGYLFF).

It belongs to the VAMP-associated protein (VAP) (TC 9.B.17) family. As to quaternary structure, interacts (via MSP domain) with duc1 (via FFAT-motif); the interaction is direct and serves to restrict the localization of duc1 to areas of cell membrane-endoplasmic reticulum contact sites, and away from the cell division site. Interacts with epr1.

It is found in the endoplasmic reticulum membrane. Functionally, vesicle-associated membrane protein-associated protein (VAP) implicated in maintaining the cortical endoplasmic reticulum (ER)-plasma membrane (PM) attachment. ER-PM contacts function to modulate the distribution of contractile ring components to ensure robust ring assembly. ER-PM contacts function also in controlling exocytosis and maintenance of cell polarity regulating cell shape. VAPs play an important role in regulating eisosome assembly. VAPs also contribute to ER-phagy by tethering atg8 to the ER membrane, but also by maintaining the ER-plasma membrane contact. Restricts the localization of duc1 away from the site of cell division. This is Vesicle-associated membrane protein-associated protein scs2 (scs2) from Schizosaccharomyces pombe (strain 972 / ATCC 24843) (Fission yeast).